Consider the following 490-residue polypeptide: Serine hydroxymethyltransferase, mitochondrial (490 aa).

The N-terminal 20 residues, 1-20, are a transit peptide targeting the mitochondrion; the sequence is MFPRASALAKCMATVHRRGL. Residue Lys265 is modified to N6-(pyridoxal phosphate)lysine.

The protein belongs to the SHMT family. In terms of assembly, homotetramer. Interacts with NAP1. Pyridoxal 5'-phosphate is required as a cofactor.

It localises to the mitochondrion. It catalyses the reaction (6R)-5,10-methylene-5,6,7,8-tetrahydrofolate + glycine + H2O = (6S)-5,6,7,8-tetrahydrofolate + L-serine. It participates in one-carbon metabolism; tetrahydrofolate interconversion. Interconversion of serine and glycine. This Saccharomyces cerevisiae (strain ATCC 204508 / S288c) (Baker's yeast) protein is Serine hydroxymethyltransferase, mitochondrial (SHM1).